Reading from the N-terminus, the 314-residue chain is Protein phosphatase PTC7 homolog fig (314 aa).

The region spanning 43 to 309 (PYLVTVVQGR…DDITLILSSV (267 aa)) is the PPM-type phosphatase domain. Mn(2+) contacts are provided by Asp-87, Gly-88, and Asp-232.

Belongs to the PP2C family. Mg(2+) serves as cofactor. It depends on Mn(2+) as a cofactor.

The enzyme catalyses O-phospho-L-seryl-[protein] + H2O = L-seryl-[protein] + phosphate. It carries out the reaction O-phospho-L-threonyl-[protein] + H2O = L-threonyl-[protein] + phosphate. This is Protein phosphatase PTC7 homolog fig from Drosophila simulans (Fruit fly).